A 190-amino-acid chain; its full sequence is Threonylcarbamoyl-AMP synthase (190 aa).

The region spanning 9-190 (FLQLALARQT…IDIVTGQQFR (182 aa)) is the YrdC-like domain.

This sequence belongs to the SUA5 family. TsaC subfamily.

The protein localises to the cytoplasm. The enzyme catalyses L-threonine + hydrogencarbonate + ATP = L-threonylcarbamoyladenylate + diphosphate + H2O. Functionally, required for the formation of a threonylcarbamoyl group on adenosine at position 37 (t(6)A37) in tRNAs that read codons beginning with adenine. Catalyzes the conversion of L-threonine, HCO(3)(-)/CO(2) and ATP to give threonylcarbamoyl-AMP (TC-AMP) as the acyladenylate intermediate, with the release of diphosphate. This Marinobacter nauticus (strain ATCC 700491 / DSM 11845 / VT8) (Marinobacter aquaeolei) protein is Threonylcarbamoyl-AMP synthase.